Consider the following 192-residue polypeptide: Protein hunchback (192 aa).

Disordered stretches follow at residues 16–59 (SHHH…SNTN), 88–108 (AAMTPSPSNNDQNSPLTWPGL), and 151–192 (ALTP…KYMA). Over residues 17–31 (HHHHHHHAHHSRRQH) the composition is skewed to basic residues. The segment covering 92 to 103 (PSPSNNDQNSPL) has biased composition (polar residues). Positions 173–192 (EPEKEHDLMSNSSEDMKYMA) are enriched in basic and acidic residues.

This sequence belongs to the hunchback C2H2-type zinc-finger protein family.

The protein resides in the nucleus. Gap class segmentation protein that controls development of head structures. This chain is Protein hunchback (hb), found in Drosophila adiastola (Fruit fly).